The following is a 115-amino-acid chain: Probable non-functional T cell receptor beta variable 7-1 (115 aa).

The signal sequence occupies residues 1-21 (MGTRLLCWAAICLLGADHTGA). Positions 22 to 115 (GVSQSLRHKV…LAVYLCASSS (94 aa)) constitute an Ig-like domain.

Most probably, the alpha-beta TR is not assembled due to incorrect folding of the beta chain. Alpha-beta TR is a heterodimer composed of an alpha and beta chain; disulfide-linked. The alpha-beta TR is associated with the transmembrane signaling CD3 coreceptor proteins to form the TR-CD3 (TcR or TCR). The assembly of alpha-beta TR heterodimers with CD3 occurs in the endoplasmic reticulum where a single alpha-beta TR heterodimer associates with one CD3D-CD3E heterodimer, one CD3G-CD3E heterodimer and one CD247 homodimer forming a stable octameric structure. CD3D-CD3E and CD3G-CD3E heterodimers preferentially associate with TR alpha and TR beta chains, respectively. The association of the CD247 homodimer is the last step of TcR assembly in the endoplasmic reticulum and is required for transport to the cell surface.

The protein localises to the cell membrane. Functionally, probable non-functional open reading frame (ORF) of V region of the variable domain of T cell receptor (TR) beta chain. Non-functional ORF generally cannot participate in the synthesis of a productive T cell receptor (TR) chain due to altered V-(D)-J or switch recombination and/or splicing site (at mRNA level) and/or conserved amino acid change (protein level). Alpha-beta T cell receptors are antigen specific receptors which are essential to the immune response and are present on the cell surface of T lymphocytes. Recognize peptide-major histocompatibility (MH) (pMH) complexes that are displayed by antigen presenting cells (APC), a prerequisite for efficient T cell adaptive immunity against pathogens. Binding of alpha-beta TR to pMH complex initiates TR-CD3 clustering on the cell surface and intracellular activation of LCK that phosphorylates the ITAM motifs of CD3G, CD3D, CD3E and CD247 enabling the recruitment of ZAP70. In turn ZAP70 phosphorylates LAT, which recruits numerous signaling molecules to form the LAT signalosome. The LAT signalosome propagates signal branching to three major signaling pathways, the calcium, the mitogen-activated protein kinase (MAPK) kinase and the nuclear factor NF-kappa-B (NF-kB) pathways, leading to the mobilization of transcription factors that are critical for gene expression and essential for T cell growth and differentiation. The T cell repertoire is generated in the thymus, by V-(D)-J rearrangement. This repertoire is then shaped by intrathymic selection events to generate a peripheral T cell pool of self-MH restricted, non-autoaggressive T cells. Post-thymic interaction of alpha-beta TR with the pMH complexes shapes TR structural and functional avidity. The chain is Probable non-functional T cell receptor beta variable 7-1 from Homo sapiens (Human).